A 455-amino-acid polypeptide reads, in one-letter code: Glutamate--tRNA ligase (455 aa).

The 'HIGH' region motif lies at 8-18 (PSPTGYLHIGG). A 'KMSKS' region motif is present at residues 231 to 235 (RLSKR). K234 is an ATP binding site.

Belongs to the class-I aminoacyl-tRNA synthetase family. Glutamate--tRNA ligase type 1 subfamily. As to quaternary structure, monomer.

The protein localises to the cytoplasm. It carries out the reaction tRNA(Glu) + L-glutamate + ATP = L-glutamyl-tRNA(Glu) + AMP + diphosphate. In terms of biological role, catalyzes the attachment of glutamate to tRNA(Glu) in a two-step reaction: glutamate is first activated by ATP to form Glu-AMP and then transferred to the acceptor end of tRNA(Glu). This chain is Glutamate--tRNA ligase, found in Vesicomyosocius okutanii subsp. Calyptogena okutanii (strain HA).